Reading from the N-terminus, the 663-residue chain is Telomere length regulator taz1 (663 aa).

A disordered region spans residues 15-72; that stretch reads ENEGDQQFDKEVVQNSDSNIETGQISDSLTKAVEERAETESSSNLSNFTTSESESSKP. Composition is skewed to polar residues over residues 27 to 43 and 54 to 67; these read VQNSDSNIETGQISDSL and ESSSNLSNFTTSES. Phosphoserine is present on serine 332. Disordered stretches follow at residues 389 to 412 and 471 to 554; these read GSTAQSADEASGHESDASEDTFSE and RAKS…PYEG. Composition is skewed to basic and acidic residues over residues 489 to 498 and 512 to 524; these read KRGDNLRREA and PPVRESDEQESRS. Positions 556–612 constitute a Myb-like domain; sequence RTRRKWTDEEENELYEMISQHGCCWSKIIHIQKLENGPLKTFGPTQIKDKARLIKAR.

Interacts with taf1 via the Myb domain, and ccq1.

The protein localises to the cytoplasm. Its subcellular location is the nucleus. It localises to the chromosome. The protein resides in the telomere. Functionally, regulates telomere length and function. Required for the repression of telomere-adjacent gene expression and for normal meiosis or sporulation. It may be a negative regulator of the telomere-replicating enzyme, telomerase, or may protect against activation of telomerase-independent pathways of telomere elongation. It may be involved in the interactions between chromosomes and spindle proteins, disruption of these interactions would lead to defective meiosis. This Schizosaccharomyces pombe (strain 972 / ATCC 24843) (Fission yeast) protein is Telomere length regulator taz1 (taz1).